Reading from the N-terminus, the 117-residue chain is Immunoglobulin heavy variable 4-4 (117 aa).

Residues 1–19 form the signal peptide; the sequence is MKHLWFFLLLVAAPRWVLS. The segment at 20–44 is framework-1; that stretch reads QVQLQESGPGLVKPSGTLSLTCAVS. One can recognise an Ig-like domain in the interval 20-117; that stretch reads QVQLQESGPG…ADTAVYYCAR (98 aa). Cysteine 41 and cysteine 115 form a disulfide bridge. Residues 45 to 53 form a complementarity-determining-1 region; that stretch reads GGSISSSNW. A framework-2 region spans residues 54–70; sequence WSWVRQPPGKGLEWIGE. The segment at 71–77 is complementarity-determining-2; the sequence is IYHSGST. The framework-3 stretch occupies residues 78–115; it reads NYNPSLKSRVTISVDKSKNQFSLKLSSVTAADTAVYYC. The tract at residues 116 to 117 is complementarity-determining-3; it reads AR.

Immunoglobulins are composed of two identical heavy chains and two identical light chains; disulfide-linked.

Its subcellular location is the secreted. It localises to the cell membrane. Functionally, v region of the variable domain of immunoglobulin heavy chains that participates in the antigen recognition. Immunoglobulins, also known as antibodies, are membrane-bound or secreted glycoproteins produced by B lymphocytes. In the recognition phase of humoral immunity, the membrane-bound immunoglobulins serve as receptors which, upon binding of a specific antigen, trigger the clonal expansion and differentiation of B lymphocytes into immunoglobulins-secreting plasma cells. Secreted immunoglobulins mediate the effector phase of humoral immunity, which results in the elimination of bound antigens. The antigen binding site is formed by the variable domain of one heavy chain, together with that of its associated light chain. Thus, each immunoglobulin has two antigen binding sites with remarkable affinity for a particular antigen. The variable domains are assembled by a process called V-(D)-J rearrangement and can then be subjected to somatic hypermutations which, after exposure to antigen and selection, allow affinity maturation for a particular antigen. This is Immunoglobulin heavy variable 4-4 from Homo sapiens (Human).